The chain runs to 362 residues: Mannose-1-phosphate guanyltransferase (362 aa).

Belongs to the transferase hexapeptide repeat family.

The protein resides in the cytoplasm. It carries out the reaction alpha-D-mannose 1-phosphate + GTP + H(+) = GDP-alpha-D-mannose + diphosphate. The protein operates within nucleotide-sugar biosynthesis; GDP-alpha-D-mannose biosynthesis; GDP-alpha-D-mannose from alpha-D-mannose 1-phosphate (GTP route): step 1/1. In terms of biological role, involved in cell wall synthesis where it is required for glycosylation. Involved in cell cycle progression through cell-size checkpoint. This chain is Mannose-1-phosphate guanyltransferase (MPG1), found in Candida albicans (strain SC5314 / ATCC MYA-2876) (Yeast).